Here is a 441-residue protein sequence, read N- to C-terminus: tRNA modification GTPase MnmE (441 aa).

Residues Arg-23, Glu-81, and Lys-121 each contribute to the (6S)-5-formyl-5,6,7,8-tetrahydrofolate site. One can recognise a TrmE-type G domain in the interval 218-363 (GFRVAIVGPP…LESWIAAFVS (146 aa)). K(+) is bound at residue Asn-228. GTP-binding positions include 228 to 233 (NAGKSS), 247 to 253 (TDIAGTT), 272 to 275 (DTAG), and 326 to 329 (NKAD). Ser-232 contacts Mg(2+). K(+) contacts are provided by Thr-247, Ile-249, and Thr-252. Thr-253 serves as a coordination point for Mg(2+). Residue Lys-441 participates in (6S)-5-formyl-5,6,7,8-tetrahydrofolate binding.

The protein belongs to the TRAFAC class TrmE-Era-EngA-EngB-Septin-like GTPase superfamily. TrmE GTPase family. As to quaternary structure, homodimer. Heterotetramer of two MnmE and two MnmG subunits. It depends on K(+) as a cofactor.

The protein resides in the cytoplasm. Its function is as follows. Exhibits a very high intrinsic GTPase hydrolysis rate. Involved in the addition of a carboxymethylaminomethyl (cmnm) group at the wobble position (U34) of certain tRNAs, forming tRNA-cmnm(5)s(2)U34. The chain is tRNA modification GTPase MnmE from Hyphomonas neptunium (strain ATCC 15444).